Reading from the N-terminus, the 500-residue chain is 4-alpha-glucanotransferase (500 aa).

It belongs to the disproportionating enzyme family.

Its subcellular location is the cytoplasm. The catalysed reaction is Transfers a segment of a (1-&gt;4)-alpha-D-glucan to a new position in an acceptor, which may be glucose or a (1-&gt;4)-alpha-D-glucan.. The sequence is that of 4-alpha-glucanotransferase (malQ) from Thermus thermophilus.